Consider the following 353-residue polypeptide: 3'(2'),5'-bisphosphate nucleotidase (353 aa).

Catalysis depends on Asp50, which acts as the Proton acceptor. Mg(2+)-binding residues include Glu73, Asp136, Ile138, and Asp139. The Proton acceptor role is filled by Thr141. 6 residues coordinate adenosine 3',5'-bisphosphate: Thr141, His232, Ser256, Lys259, Arg273, and Asp286. AMP contacts are provided by His232, Ser256, Lys259, Arg273, and Asp286. Asp286 provides a ligand contact to Mg(2+).

It belongs to the inositol monophosphatase superfamily. It depends on Mg(2+) as a cofactor.

The catalysed reaction is 3'-phosphoadenylyl sulfate + H2O = adenosine 5'-phosphosulfate + phosphate. The enzyme catalyses adenosine 3',5'-bisphosphate + H2O = AMP + phosphate. It carries out the reaction adenosine 2',5'-bisphosphate + H2O = AMP + phosphate. It catalyses the reaction 1D-myo-inositol 1,4-bisphosphate + H2O = 1D-myo-inositol 4-phosphate + phosphate. The catalysed reaction is 1D-myo-inositol 1,3,4-trisphosphate + H2O = 1D-myo-inositol 3,4-bisphosphate + phosphate. With respect to regulation, inhibited by Li(+) and Na(+). Phosphatase that converts adenosine 3'-phosphate 5'-phosphosulfate (PAPS) to adenosine 5'-phosphosulfate (APS) and 3'(2')-phosphoadenosine 5'-phosphate (PAP) to AMP. May regulate the flux of sulfur in the sulfur-activation pathway by converting PAPS to APS. Is also able to hydrolyze inositol 1,4-bisphosphate (Ins(1,4)P2) and inositol 1,3,4-trisphosphate (Ins(1,3,4)P3), but is not active on inositol 1,4,5-trisphosphate, inositol 1-phosphate, fructose 1,6-bisphosphate, AMP and ATP. In terms of biological role, confers resistance to lithium. The chain is 3'(2'),5'-bisphosphate nucleotidase (tol1) from Schizosaccharomyces pombe (strain 972 / ATCC 24843) (Fission yeast).